A 511-amino-acid polypeptide reads, in one-letter code: ADP,ATP carrier protein 4 (511 aa).

The next 12 membrane-spanning stretches (helical) occupy residues valine 34 to isoleucine 54, isoleucine 71 to valine 91, isoleucine 102 to phenylalanine 122, phenylalanine 157 to tryptophan 177, phenylalanine 192 to glutamate 212, phenylalanine 231 to isoleucine 251, leucine 296 to lysine 316, alanine 330 to leucine 350, phenylalanine 361 to valine 381, leucine 390 to isoleucine 410, leucine 453 to serine 473, and serine 476 to threonine 496.

It belongs to the ADP/ATP translocase tlc family.

It localises to the cell membrane. Its function is as follows. Provides the rickettsial cell with host ATP in exchange for rickettsial ADP. This is an obligate exchange system. This energy acquiring activity is an important component of rickettsial parasitism. The sequence is that of ADP,ATP carrier protein 4 (tlcD) from Rickettsia felis (strain ATCC VR-1525 / URRWXCal2) (Rickettsia azadi).